A 1414-amino-acid polypeptide reads, in one-letter code: MADQAKLLFYNKMMDRTAIKHLIRRLISHFGITFTANILDQIKTLGFHQATNASISLGIDDLLTAPLKSWLIQDAEKQGYSSEQHHRYGSVHSVEKLRQLIETWYATSEYLKQEMNPNFRMTDPLNPVHMMSFSGARGSISQVHQLVGMRGLMSDPQGQIIDLPIQNNFREGLSLTEYIISCYGARKGVVDTAVRTSDAGYLTRRLVEVVQHIVVRKKDCGTLRGILLNSNRDGRRSIQPFSQQRLIGRVLADNLYVNMRCIATRNQDISNELARRLVISQVRQIYIRSPLTCKSMFCICQLCYGWNLTYNHLVELGEAVGIIAGQSIGEPGTQLTLRTFHTGGVFTGDIAEHIRTPFNGIIKFDEDLVYATRTRHGHPAWLCQDNLPVSIESKEKIHNFIVPAQSLLLVQNNQYVGSKQVIGQIRTTKSPLKERVKKPIYSNLDGELHWDTTVRHLSEHIHNNIHRVVKSGHIWILSGKLHNLSKTSLFFYQNQDKIHVQSPSITNYKSLPNSSEKDTKRDLDFIDSNIAKKESQTSNFGFSFSKITPNPSDSTNILSNIELKRNRRKNRVILLLGRVKSRYRKKSYSSFVLDIPNNGILNQGDILAISESPQYQTEISGIIKYGTIKVDSVGKREYIGDNEKTTTFRSRYKILKGGNFFLIPEEVYTIYQPSSHIFVSNNSIIEPGTQITFNITSRGGGLVQIKKVRKIFEIRILPGNIYYPKRLHKISKQTDILIPPGQKIFDEFKSDNWIYLQWITPYRKKTFLPVRPVLEYIISNHSFIEISSTFTYSRYRDIIQVQAAEYIFYEDGEEVRIRNNTSSIQLVQTCLVVNWKEPSIVRVAYVSPIEIRFNNILKTFLQISLIEFSNAYVEKGNSRASLKRLFSNQPFYSNNANNHLLSQFPINHPGVVRRLSDQGTDRSFVVLLPSDSYQSFYSPCHDGRNRRKQFVESRYKISFCEKEISERSNTLFLSFNRKKFLKLKEKLTNSFSSFDHHCMMQTTERLGLLGTVHSIAHYSLYSHRIINKNFFLSKDLDIDNSRAISQNSNWYILDENRVICGFDLIDSTQEDLSNRPHYLSVPCDVIIPFVNLGQFICEGVSLYEHETSYQSGQIIAIYQESVMIRLSKPYLATKGATVHSNYGDILKEGDTLITLIYERLRSGDIIQGLPKVEQLLEARSINSVSLDLEKNFLFWNNTMIRLVGNFWSHFLGVKTSIEQCQLFLVNKVQKVYRSQGVQISDKHIEIIVRQMTSKVITLEDGMANVFSPGELIELSRAQRMNRALKESISHKPIVLGMTKASLNTTSFISEASFQETTRVLARAALQGRIDWLKGLKENVVPGSVVPTGTGSREVICQIDIEKRKELGLLKTKNNKIFIRKIRDIFFYHEKVSISKNPKYIHMRLKKPVLKEINI.

Residues cysteine 220, cysteine 293, cysteine 300, and cysteine 303 each contribute to the Zn(2+) site.

Belongs to the RNA polymerase beta' chain family. RpoC2 subfamily. In terms of assembly, in plastids the minimal PEP RNA polymerase catalytic core is composed of four subunits: alpha, beta, beta', and beta''. When a (nuclear-encoded) sigma factor is associated with the core the holoenzyme is formed, which can initiate transcription. Zn(2+) serves as cofactor.

It localises to the plastid. The protein resides in the chloroplast. It carries out the reaction RNA(n) + a ribonucleoside 5'-triphosphate = RNA(n+1) + diphosphate. DNA-dependent RNA polymerase catalyzes the transcription of DNA into RNA using the four ribonucleoside triphosphates as substrates. The protein is DNA-directed RNA polymerase subunit beta'' of Angiopteris evecta (Mule's foot fern).